A 97-amino-acid chain; its full sequence is MDFSQLSGLLDGVKKEFSQLEEKNKDTIYTSKSGGGMVSVSFNGVGELVDLQIDDSLLEDKEAMQIYLMSALNDGYKSVEENRKNLAFSMLGNFAKL.

The protein belongs to the YbaB/EbfC family. As to quaternary structure, homodimer.

It is found in the cytoplasm. The protein resides in the nucleoid. Its function is as follows. Binds to DNA and alters its conformation. May be involved in regulation of gene expression, nucleoid organization and DNA protection. The sequence is that of Nucleoid-associated protein Hac_0048 from Helicobacter acinonychis (strain Sheeba).